The following is a 203-amino-acid chain: DNA-binding transcriptional repressor ScoC (203 aa).

One can recognise an HTH marR-type domain in the interval Ala13–Gly157. Residues Ile63–Glu86 constitute a DNA-binding region (H-T-H motif). Residues Lys183–Ser203 are disordered. The segment covering Ala191 to Ser203 has biased composition (acidic residues).

Homodimer. Interacts with SinR.

Negative regulator of protease production and sporulation. Acts by binding directly to the promoter of protease genes (aprE and nprE), and by repressing oligopeptide permease operons (appABCDF and oppABCDF), thereby preventing uptake of oligopeptides required for initiation of sporulation. Acts with SinR as a corepressor of epr expression. Binds to non-m6A-5-methylated 5'-GACGAG-3' sites, tested with scpA; when the target is methylated by DnmA, this repressor no longer binds and transcription is up-regulated. This is DNA-binding transcriptional repressor ScoC from Bacillus subtilis (strain 168).